Reading from the N-terminus, the 986-residue chain is P3N-PIPO polyprotein (986 aa).

One can recognise a Peptidase S30 domain in the interval 141 to 284 (KLTEGQMNHL…QGVMDSMVQF (144 aa)). Catalysis depends on for P1 proteinase activity residues His192, Asp201, and Ser235. The Involved in interaction with stylet and aphid transmission motif lies at 334–337 (KITC). The Involved in virions binding and aphid transmission signature appears at 592 to 594 (PTK). The 123-residue stretch at 618–740 (LYIARQGFCY…ESDIKHYRVG (123 aa)) folds into the Peptidase C6 domain. Catalysis depends on for helper component proteinase activity residues Cys626 and His699.

It belongs to the potyviridae P3N-PIPO polyprotein family. As to quaternary structure, interacts (via PIPO domain) with host PCaP1 protein; this interaction may help to anchor the movement complex to the plasma membrane from which the complex could move to the plasmodesmata. In terms of processing, potyviral RNA is expressed as two polyproteins which undergo post-translational proteolytic processing. Genome polyprotein is processed by NIa-pro, P1 and HC-pro proteinases resulting in the production of at least ten individual proteins. P3N-PIPO is cleaved by P1 and HC-pro proteinases resulting in the production of three individual proteins. The P1 proteinase and the HC-pro cleave only their respective C-termini autocatalytically.

It localises to the host cell junction. The protein localises to the host plasmodesma. The catalysed reaction is Hydrolyzes a Gly-|-Gly bond at its own C-terminus, commonly in the sequence -Tyr-Xaa-Val-Gly-|-Gly, in the processing of the potyviral polyprotein.. Its function is as follows. Required for aphid transmission and also has proteolytic activity. Only cleaves a Gly-Gly dipeptide at its own C-terminus. Interacts with virions and aphid stylets. Acts as a suppressor of RNA-mediated gene silencing, also known as post-transcriptional gene silencing (PTGS), a mechanism of plant viral defense that limits the accumulation of viral RNAs. May have RNA-binding activity. In terms of biological role, allows efficient cell to cell propagation, by bypassing the host cell wall barrier. Transports viral genome to neighboring plant cells directly through plasmosdesmata, without any budding. The protein is P3N-PIPO polyprotein of Capsicum (peppers).